The sequence spans 223 residues: Endonuclease NucS (223 aa).

Belongs to the NucS endonuclease family.

It localises to the cytoplasm. In terms of biological role, cleaves both 3' and 5' ssDNA extremities of branched DNA structures. This chain is Endonuclease NucS, found in Mycolicibacterium gilvum (strain PYR-GCK) (Mycobacterium gilvum (strain PYR-GCK)).